Consider the following 127-residue polypeptide: MIIGVGTDIVQIPRIEKIIKLYPEIFPKRILNTEELKKFALLKKESHVTFLAKRFAAKEAISKAFGVGIGRGINFKDITLLNDELGKPIVKIDSLYTQKLPPFNIHLSLSDDYPICVAFVVVEKIIL.

2 residues coordinate Mg(2+): Asp-8 and Glu-59.

It belongs to the P-Pant transferase superfamily. AcpS family. The cofactor is Mg(2+).

It localises to the cytoplasm. It carries out the reaction apo-[ACP] + CoA = holo-[ACP] + adenosine 3',5'-bisphosphate + H(+). In terms of biological role, transfers the 4'-phosphopantetheine moiety from coenzyme A to a Ser of acyl-carrier-protein. This is Holo-[acyl-carrier-protein] synthase from Rickettsia bellii (strain OSU 85-389).